Here is a 342-residue protein sequence, read N- to C-terminus: GTPase Obg (342 aa).

Residues 1–159 form the Obg domain; sequence MQFIDQAQIE…KLLRLELKLL (159 aa). The 171-residue stretch at 160-330 folds into the OBG-type G domain; it reads AEVGIIGLPN…MLQEVWGILD (171 aa). Residues 166–173, 191–195, 213–216, 280–283, and 311–313 contribute to the GTP site; these read GLPNAGKS, FTTLI, DIPG, NKID, and SAV. 2 residues coordinate Mg(2+): Ser173 and Thr193.

This sequence belongs to the TRAFAC class OBG-HflX-like GTPase superfamily. OBG GTPase family. Monomer. It depends on Mg(2+) as a cofactor.

The protein localises to the cytoplasm. Functionally, an essential GTPase which binds GTP, GDP and possibly (p)ppGpp with moderate affinity, with high nucleotide exchange rates and a fairly low GTP hydrolysis rate. Plays a role in control of the cell cycle, stress response, ribosome biogenesis and in those bacteria that undergo differentiation, in morphogenesis control. This is GTPase Obg from Trichormus variabilis (strain ATCC 29413 / PCC 7937) (Anabaena variabilis).